The primary structure comprises 254 residues: Alcohol dehydrogenase 1 (254 aa).

10 to 33 contributes to the NAD(+) binding site; that stretch reads FVAGLGGIGFDTSREIVKSGPKNL. Serine 138 is a binding site for substrate. Catalysis depends on tyrosine 151, which acts as the Proton acceptor.

The protein belongs to the short-chain dehydrogenases/reductases (SDR) family. As to quaternary structure, homodimer.

It carries out the reaction a primary alcohol + NAD(+) = an aldehyde + NADH + H(+). It catalyses the reaction a secondary alcohol + NAD(+) = a ketone + NADH + H(+). This is Alcohol dehydrogenase 1 (Adh1) from Drosophila navojoa (Fruit fly).